Here is a 121-residue protein sequence, read N- to C-terminus: Alpha-endosulfine (121 aa).

Residues 1-53 are disordered; the sequence is MSQKQEEENPAEETGEEKQDTQEKEGILPEKAEEAKLKAKYPSLGQKPGGSDF. Serine 2 carries the post-translational modification N-acetylserine. Serine 2 is modified (phosphoserine). The span at 16–37 shows a compositional bias: basic and acidic residues; sequence EEKQDTQEKEGILPEKAEEAKL. The residue at position 21 (threonine 21) is a Phosphothreonine. Serine 43 carries the phosphoserine modification. Serine 67 carries the phosphoserine; by GWL modification. Residues 79-121 are disordered; the sequence is NKQLPSAGPDKNLVTGDHIPTPQDLPQRKSSLVTSKLAGGQVE. Serine 109 carries the post-translational modification Phosphoserine; by PKA.

It belongs to the endosulfine family. Interacts (when phosphorylated at Ser-67) with PPP2R2D. Interacts with ABCC8. Interacts with SNCA; interaction is disrupted when phosphorylated at Ser-109. Phosphorylation at Ser-67 by GWL during mitosis is essential for interaction with PPP2R2D (PR55-delta) and subsequent inactivation of PP2A. Phosphorylated by PKA.

The protein localises to the cytoplasm. In terms of biological role, protein phosphatase inhibitor that specifically inhibits protein phosphatase 2A (PP2A) during mitosis. When phosphorylated at Ser-67 during mitosis, specifically interacts with PPP2R2D (PR55-delta) and inhibits its activity, leading to inactivation of PP2A, an essential condition to keep cyclin-B1-CDK1 activity high during M phase. Also acts as a stimulator of insulin secretion by interacting with sulfonylurea receptor (ABCC8), thereby preventing sulfonylurea from binding to its receptor and reducing K(ATP) channel currents. This is Alpha-endosulfine (ENSA) from Bos taurus (Bovine).